The chain runs to 491 residues: Lysine--tRNA ligase (491 aa).

Residues Glu-398 and Glu-405 each contribute to the Mg(2+) site.

It belongs to the class-II aminoacyl-tRNA synthetase family. Homodimer. Requires Mg(2+) as cofactor.

The protein resides in the cytoplasm. The enzyme catalyses tRNA(Lys) + L-lysine + ATP = L-lysyl-tRNA(Lys) + AMP + diphosphate. The protein is Lysine--tRNA ligase of Mycoplasmopsis synoviae (strain 53) (Mycoplasma synoviae).